We begin with the raw amino-acid sequence, 464 residues long: Protein FAM90A15 (464 aa).

Disordered regions lie at residues 1–42 (MMAR…DPRL), 70–389 (PATL…HDGA), and 415–437 (HSPEKPGAFLAQSPHVSEKSEAP). Composition is skewed to basic and acidic residues over residues 74-89 (GKKEGKENLKPWKPRV) and 97-114 (NKDKGEKEERPRQQDPQR). A compositionally biased stretch (low complexity) spans 180 to 197 (LASLSPLRKASLSSSSSL).

This sequence belongs to the FAM90 family.

This chain is Protein FAM90A15, found in Homo sapiens (Human).